The following is a 185-amino-acid chain: Elongation factor P (185 aa).

The protein belongs to the elongation factor P family.

Its subcellular location is the cytoplasm. The protein operates within protein biosynthesis; polypeptide chain elongation. Functionally, involved in peptide bond synthesis. Stimulates efficient translation and peptide-bond synthesis on native or reconstituted 70S ribosomes in vitro. Probably functions indirectly by altering the affinity of the ribosome for aminoacyl-tRNA, thus increasing their reactivity as acceptors for peptidyl transferase. The sequence is that of Elongation factor P from Streptococcus pyogenes serotype M4 (strain MGAS10750).